Consider the following 123-residue polypeptide: Large ribosomal subunit protein bL12 (123 aa).

This sequence belongs to the bacterial ribosomal protein bL12 family. Homodimer. Part of the ribosomal stalk of the 50S ribosomal subunit. Forms a multimeric L10(L12)X complex, where L10 forms an elongated spine to which 2 to 4 L12 dimers bind in a sequential fashion. Binds GTP-bound translation factors.

In terms of biological role, forms part of the ribosomal stalk which helps the ribosome interact with GTP-bound translation factors. Is thus essential for accurate translation. The sequence is that of Large ribosomal subunit protein bL12 from Maricaulis maris (strain MCS10) (Caulobacter maris).